We begin with the raw amino-acid sequence, 1311 residues long: Kinase and exchange factor for Rac A (1311 aa).

Positions 18-316 constitute a Protein kinase domain; sequence LVFKDIIGKG…STIVTILESI (299 aa). Residues 24–32 and Lys45 each bind ATP; that span reads IGKGNFGCV. The active-site Proton acceptor is the Asp138. 3 disordered regions span residues 169-201, 360-426, and 446-471; these read NGSD…KNNG, QQQS…TTTT, and PLSK…LIGS. Positions 451–471 are enriched in low complexity; it reads QQQQQRNQNSSIIDNNSLIGS. The 30-residue stretch at 650-679 folds into the IQ domain; sequence ELNLIIKLQSRIRGWLVRRRYKIFLSNWKL. One can recognise a DH domain in the interval 691–927; sequence QWIRLFNQLI…RETSNYIQSQ (237 aa). Low complexity-rich tracts occupy residues 994 to 1021 and 1031 to 1044; these read SKYN…TNSN and STSN…GNNN. Disordered stretches follow at residues 994 to 1044, 1114 to 1145, and 1208 to 1311; these read SKYN…GNNN, NNPN…NGSI, and GTST…FSKD. Residues 1117 to 1137 show a composition bias toward gly residues; the sequence is NGGGSNNNSIGGGGGGRGGSG. Residues 1208-1229 are compositionally biased toward polar residues; that stretch reads GTSTPERKTSLVNMSPSTTSSL. Positions 1230 to 1245 are enriched in low complexity; that stretch reads NNIDSNYNNNNNNVTN. Polar residues predominate over residues 1246–1257; it reads TPIKSVTSSPSI. Residues 1263 to 1276 show a composition bias toward low complexity; it reads NDNNQQPQLPSQPN. Positions 1277-1287 are enriched in polar residues; the sequence is EEFQFTVPTTP. The segment covering 1290–1303 has biased composition (basic residues); the sequence is KKKKRGSFSSKLKR.

Belongs to the protein kinase superfamily. TKL Ser/Thr protein kinase family. Mg(2+) is required as a cofactor.

It carries out the reaction L-seryl-[protein] + ATP = O-phospho-L-seryl-[protein] + ADP + H(+). The catalysed reaction is L-threonyl-[protein] + ATP = O-phospho-L-threonyl-[protein] + ADP + H(+). This Dictyostelium discoideum (Social amoeba) protein is Kinase and exchange factor for Rac A (kxcA).